Reading from the N-terminus, the 109-residue chain is U4-lycotoxin-Ls1a (109 aa).

An N-terminal signal peptide occupies residues 1–22; sequence MKVLVLFSVLFLTLFSYSSTEA. The propeptide occupies 23-44; the sequence is IDELDSDAEEDMLSLMANEQVR. The interval 45 to 88 is knottin domain; the sequence is AKACTPRLHDCSHDRHSCCRGELFKDVCYCFYPEGEDKTEVCSC. Intrachain disulfides connect C48-C63, C55-C72, C62-C88, and C74-C86. The segment at 89–108 is linear cationic cytotoxin domain; that stretch reads QQPKSHKYIEKVVDKAKTVV.

This sequence belongs to the neurotoxin 19 (CSTX) family. 05 (U4-Lctx) subfamily. In terms of tissue distribution, expressed by the venom gland.

Its subcellular location is the secreted. In terms of biological role, enhances the high-affinity desensitization of human P2RX3 purinoceptors. In Lycosa singoriensis (Wolf spider), this protein is U4-lycotoxin-Ls1a.